A 473-amino-acid polypeptide reads, in one-letter code: Arginine biosynthesis bifunctional protein ArgJ, mitochondrial (473 aa).

The substrate site is built by threonine 201, lysine 230, threonine 241, glutamate 328, asparagine 468, and threonine 473. Residue threonine 241 is the Nucleophile of the active site.

The protein belongs to the ArgJ family. As to quaternary structure, heterodimer of an alpha and a beta chain. The alpha and beta chains are autoproteolytically processed from a single precursor protein within the mitochondrion.

The protein resides in the mitochondrion matrix. The enzyme catalyses N(2)-acetyl-L-ornithine + L-glutamate = N-acetyl-L-glutamate + L-ornithine. It carries out the reaction L-glutamate + acetyl-CoA = N-acetyl-L-glutamate + CoA + H(+). Its pathway is amino-acid biosynthesis; L-arginine biosynthesis; L-ornithine and N-acetyl-L-glutamate from L-glutamate and N(2)-acetyl-L-ornithine (cyclic): step 1/1. It participates in amino-acid biosynthesis; L-arginine biosynthesis; N(2)-acetyl-L-ornithine from L-glutamate: step 1/4. In terms of biological role, catalyzes two activities which are involved in the cyclic version of arginine biosynthesis: the synthesis of acetylglutamate from glutamate and acetyl-CoA, and of ornithine by transacetylation between acetylornithine and glutamate. This is Arginine biosynthesis bifunctional protein ArgJ, mitochondrial from Ajellomyces capsulatus (strain H143) (Darling's disease fungus).